The primary structure comprises 217 residues: Ribonuclease HII (217 aa).

One can recognise an RNase H type-2 domain in the interval Ser27–Cys216. A divalent metal cation is bound by residues Asp33, Glu34, and Asp126.

This sequence belongs to the RNase HII family. Requires Mn(2+) as cofactor. Mg(2+) is required as a cofactor.

It localises to the cytoplasm. The catalysed reaction is Endonucleolytic cleavage to 5'-phosphomonoester.. In terms of biological role, endonuclease that specifically degrades the RNA of RNA-DNA hybrids. This is Ribonuclease HII (rnhB) from Chlamydia trachomatis serovar D (strain ATCC VR-885 / DSM 19411 / UW-3/Cx).